The primary structure comprises 321 residues: Leucine-rich repeat-containing protein 46 (321 aa).

LRR repeat units follow at residues 45–66 (ELQT…EGLQ), 67–88 (NLHS…ACIP), 89–110 (SLRF…LDLP), and 111–132 (CLQF…EFPQ). Residues 142-184 (NSCTNQDGYRELVTEALPLLLDLDGQPVVERWISDEEDEASSD) enclose the LRRCT domain. Phosphoserine occurs at positions 175 and 182. Residues 201 to 221 (LKELEQELSRHREHRQQTALT) are a coiled coil. A disordered region spans residues 235–321 (DLPLLPGVPM…TKTTAKRSKK (87 aa)).

The protein localises to the cell projection. It localises to the cilium. It is found in the flagellum. Required for normal spermatogenesis and male fertility. Plays an important role in sperm flagellum biogenesis. The sequence is that of Leucine-rich repeat-containing protein 46 (LRRC46) from Homo sapiens (Human).